Reading from the N-terminus, the 809-residue chain is Endoplasmin homolog (809 aa).

Positions 1–18 (MRKWALSCALLLVLLLTT) are cleaved as a signal peptide. Positions 111, 155, 168, and 200 each coordinate ATP. N-linked (GlcNAc...) asparagine glycosylation is present at Asn-111. Positions 293–320 (VPADEEESNEEEESTTETTEEEETEDDE) are enriched in acidic residues. Residues 293–329 (VPADEEESNEEEESTTETTEEEETEDDEEKKPKTKTV) form a disordered region. 3 N-linked (GlcNAc...) asparagine glycosylation sites follow: Asn-410, Asn-450, and Asn-617. The disordered stretch occupies residues 766 to 809 (SLDLSPDAAVEEEEEVEEPEVEEKESAKQEAEEPEHEQYDKDEL). Positions 774 to 788 (AVEEEEEVEEPEVEE) are enriched in acidic residues. A compositionally biased stretch (basic and acidic residues) spans 789 to 809 (KESAKQEAEEPEHEQYDKDEL). Residues 806-809 (KDEL) carry the Prevents secretion from ER motif.

This sequence belongs to the heat shock protein 90 family.

It is found in the endoplasmic reticulum lumen. Functionally, may have a molecular chaperone role in the processing of secreted materials. The protein is Endoplasmin homolog of Hordeum vulgare (Barley).